The sequence spans 489 residues: WD repeat-containing protein JIP5 (489 aa).

Residues 4–45 (PLSSDALDLCFHPAAETNLLAVGLISGKIQLINYDDYLSSPS) form a WD 1 repeat. The segment at 46-66 (SSRTPLAPPSKKSKPSTISSA) is disordered. The WD 2 repeat unit spans residues 124 to 163 (EVHDAAPSRVLPVDESLVVTGDDDGVVRLWDVRKGGGKGI). The disordered stretch occupies residues 192 to 246 (SIKEAKKSKTQLKKQRRRARQAERLKEHDKEKREQNASDTEASEPDSEDDAAIKV). The segment covering 199 to 210 (SKTQLKKQRRRA) has biased composition (basic residues). Positions 211–227 (RQAERLKEHDKEKREQN) are enriched in basic and acidic residues. Residues 232–241 (EASEPDSEDD) are compositionally biased toward acidic residues. WD repeat units follow at residues 279-318 (DQEDELLSITSIRSSTKLVVGTQLGILSLWTPSRGLLDHV) and 323-363 (GHPA…GVIA). The disordered stretch occupies residues 417-489 (IVGLAEDDSD…AGKGGFFSDL (73 aa)). 2 stretches are compositionally biased toward acidic residues: residues 421 to 440 (AEDDSDDDDDDDDDDDDDDD) and 449 to 472 (DGAEQTDGDAESGQDDEQDPDSED).

This sequence belongs to the WD repeat WDR55 family.

It is found in the nucleus. The protein localises to the nucleolus. This chain is WD repeat-containing protein JIP5 (JIP5), found in Mycosarcoma maydis (Corn smut fungus).